We begin with the raw amino-acid sequence, 106 residues long: Envelope small membrane protein (106 aa).

Residues 1 to 11 are Virion surface-facing; sequence MMNLLNTSLEE. Residues 12 to 32 form a helical membrane-spanning segment; it reads NGSFLTALYVICEFVALYLLG. Over 33-106 the chain is Intravirion; the sequence is RALQAFVQAA…ANFQNGKLHT (74 aa).

The protein belongs to the gammacoronaviruses E protein family. Homooligomer. Interacts with the M membrane protein in the budding compartment of the host cell, which is located between endoplasmic reticulum and the Golgi complex. The cytoplasmic tails of both proteins are important for this function. Interacts with Nucleoprotein.

It localises to the host Golgi apparatus membrane. Functionally, plays a central role in virus morphogenesis and assembly. Acts as a viroporin and self-assembles in host membranes forming pentameric protein-lipid pores that allow ion transport. Also plays a role in the induction of apoptosis. The chain is Envelope small membrane protein from Gallus gallus (Chicken).